A 179-amino-acid chain; its full sequence is 5'-deoxynucleotidase VV1_0013 (179 aa).

An a divalent metal cation-binding site is contributed by histidine 53. Residues 62–65 and aspartate 122 each bind substrate; that span reads DLPT. A divalent metal cation is bound at residue aspartate 122.

It belongs to the 5DNU family. Homodimer. It depends on a divalent metal cation as a cofactor.

The protein localises to the cytoplasm. The catalysed reaction is a 2'-deoxyribonucleoside 5'-phosphate + H2O = a 2'-deoxyribonucleoside + phosphate. Catalyzes the strictly specific dephosphorylation of 2'-deoxyribonucleoside 5'-monophosphates. This Vibrio vulnificus (strain CMCP6) protein is 5'-deoxynucleotidase VV1_0013.